The sequence spans 176 residues: Protein FimF (176 aa).

The N-terminal stretch at 1–20 (MRNKPFYLLCAFLWLAVSHA) is a signal peptide. Residues Cys-38 and Cys-78 are joined by a disulfide bond.

The protein belongs to the fimbrial protein family.

Its subcellular location is the fimbrium. Functionally, involved in regulation of length and mediation of adhesion of type 1 fimbriae (but not necessary for the production of fimbriae). Involved in the integration of FimH in the fimbriae. The chain is Protein FimF (fimF) from Escherichia coli (strain K12).